The sequence spans 426 residues: D-amino acid dehydrogenase (426 aa).

3–17 is a binding site for FAD; it reads VVVLGAGVIGVTTAW.

It belongs to the DadA oxidoreductase family. The cofactor is FAD.

It catalyses the reaction a D-alpha-amino acid + A + H2O = a 2-oxocarboxylate + AH2 + NH4(+). The protein operates within amino-acid degradation; D-alanine degradation; NH(3) and pyruvate from D-alanine: step 1/1. Its function is as follows. Oxidative deamination of D-amino acids. In Phenylobacterium zucineum (strain HLK1), this protein is D-amino acid dehydrogenase.